We begin with the raw amino-acid sequence, 173 residues long: Small ribosomal subunit protein uS4c (173 aa).

Positions 94–155 (SRLDSKIYRS…TKLTSELIEK (62 aa)) constitute an S4 RNA-binding domain.

Belongs to the universal ribosomal protein uS4 family. Part of the 30S ribosomal subunit. Contacts protein S5. The interaction surface between S4 and S5 is involved in control of translational fidelity.

The protein resides in the plastid. Functionally, one of the primary rRNA binding proteins, it binds directly to 16S rRNA where it nucleates assembly of the body of the 30S subunit. Its function is as follows. With S5 and S12 plays an important role in translational accuracy. In Helicosporidium sp. subsp. Simulium jonesii (Green alga), this protein is Small ribosomal subunit protein uS4c (rps4).